The following is a 373-amino-acid chain: UDP-N-acetylglucosamine--N-acetylmuramyl-(pentapeptide) pyrophosphoryl-undecaprenol N-acetylglucosamine transferase (373 aa).

Residues threonine 10–glycine 12, asparagine 124, arginine 166, serine 196, and glutamine 301 each bind UDP-N-acetyl-alpha-D-glucosamine.

This sequence belongs to the glycosyltransferase 28 family. MurG subfamily.

Its subcellular location is the cell membrane. The enzyme catalyses di-trans,octa-cis-undecaprenyl diphospho-N-acetyl-alpha-D-muramoyl-L-alanyl-D-glutamyl-meso-2,6-diaminopimeloyl-D-alanyl-D-alanine + UDP-N-acetyl-alpha-D-glucosamine = di-trans,octa-cis-undecaprenyl diphospho-[N-acetyl-alpha-D-glucosaminyl-(1-&gt;4)]-N-acetyl-alpha-D-muramoyl-L-alanyl-D-glutamyl-meso-2,6-diaminopimeloyl-D-alanyl-D-alanine + UDP + H(+). It participates in cell wall biogenesis; peptidoglycan biosynthesis. Cell wall formation. Catalyzes the transfer of a GlcNAc subunit on undecaprenyl-pyrophosphoryl-MurNAc-pentapeptide (lipid intermediate I) to form undecaprenyl-pyrophosphoryl-MurNAc-(pentapeptide)GlcNAc (lipid intermediate II). This Desulforudis audaxviator (strain MP104C) protein is UDP-N-acetylglucosamine--N-acetylmuramyl-(pentapeptide) pyrophosphoryl-undecaprenol N-acetylglucosamine transferase.